Consider the following 289-residue polypeptide: 4-hydroxy-tetrahydrodipicolinate synthase (289 aa).

Residue Thr43 coordinates pyruvate. Residue Tyr131 is the Proton donor/acceptor of the active site. Lys160 functions as the Schiff-base intermediate with substrate in the catalytic mechanism. Val200 serves as a coordination point for pyruvate.

It belongs to the DapA family. Homotetramer; dimer of dimers.

Its subcellular location is the cytoplasm. It carries out the reaction L-aspartate 4-semialdehyde + pyruvate = (2S,4S)-4-hydroxy-2,3,4,5-tetrahydrodipicolinate + H2O + H(+). The protein operates within amino-acid biosynthesis; L-lysine biosynthesis via DAP pathway; (S)-tetrahydrodipicolinate from L-aspartate: step 3/4. Functionally, catalyzes the condensation of (S)-aspartate-beta-semialdehyde [(S)-ASA] and pyruvate to 4-hydroxy-tetrahydrodipicolinate (HTPA). The chain is 4-hydroxy-tetrahydrodipicolinate synthase from Methanococcus maripaludis (strain C6 / ATCC BAA-1332).